We begin with the raw amino-acid sequence, 258 residues long: Imidazole glycerol phosphate synthase subunit HisF (258 aa).

Active-site residues include D11 and D130.

The protein belongs to the HisA/HisF family. Heterodimer of HisH and HisF.

The protein resides in the cytoplasm. It carries out the reaction 5-[(5-phospho-1-deoxy-D-ribulos-1-ylimino)methylamino]-1-(5-phospho-beta-D-ribosyl)imidazole-4-carboxamide + L-glutamine = D-erythro-1-(imidazol-4-yl)glycerol 3-phosphate + 5-amino-1-(5-phospho-beta-D-ribosyl)imidazole-4-carboxamide + L-glutamate + H(+). It functions in the pathway amino-acid biosynthesis; L-histidine biosynthesis; L-histidine from 5-phospho-alpha-D-ribose 1-diphosphate: step 5/9. Functionally, IGPS catalyzes the conversion of PRFAR and glutamine to IGP, AICAR and glutamate. The HisF subunit catalyzes the cyclization activity that produces IGP and AICAR from PRFAR using the ammonia provided by the HisH subunit. The protein is Imidazole glycerol phosphate synthase subunit HisF of Blochmanniella floridana.